Consider the following 77-residue polypeptide: Large ribosomal subunit protein bL28 (77 aa).

This sequence belongs to the bacterial ribosomal protein bL28 family.

In Polaromonas naphthalenivorans (strain CJ2), this protein is Large ribosomal subunit protein bL28.